The primary structure comprises 267 residues: MTHRIAFIGLGAIASDVAAGLLADAAQPCQLAALTRNAADLPPALAGRVALLDGLPGLLAWRPDLVVEAAGQQAIAEHAEGCLTAGLDMIICSAGALADDALRARLIAAAEAGGARIRVPAGAIAGLDYLQAVAGRDDAEVVYESRKPVAAWRAELPGMGIDPDTLAESRTLFSGPAREAALRFPKNLNVAATLALAGIGMTRTRVEVVVDPQARGNQHRIQVRSPLGEMQIELVNAPSPANPKTSWLVAHSVLATIRRHLARFTIG.

NAD(+)-binding residues include A123 and N189. Residue H219 is part of the active site.

The protein belongs to the L-aspartate dehydrogenase family.

The enzyme catalyses L-aspartate + NADP(+) + H2O = oxaloacetate + NH4(+) + NADPH + H(+). It carries out the reaction L-aspartate + NAD(+) + H2O = oxaloacetate + NH4(+) + NADH + H(+). It participates in cofactor biosynthesis; NAD(+) biosynthesis; iminoaspartate from L-aspartate (dehydrogenase route): step 1/1. Specifically catalyzes the NAD or NADP-dependent dehydrogenation of L-aspartate to iminoaspartate. This Bordetella pertussis (strain Tohama I / ATCC BAA-589 / NCTC 13251) protein is L-aspartate dehydrogenase 2.